A 201-amino-acid chain; its full sequence is Large ribosomal subunit protein uL4 (201 aa).

The tract at residues Ala45–Gly71 is disordered.

The protein belongs to the universal ribosomal protein uL4 family. Part of the 50S ribosomal subunit.

Functionally, one of the primary rRNA binding proteins, this protein initially binds near the 5'-end of the 23S rRNA. It is important during the early stages of 50S assembly. It makes multiple contacts with different domains of the 23S rRNA in the assembled 50S subunit and ribosome. Forms part of the polypeptide exit tunnel. In Shewanella pealeana (strain ATCC 700345 / ANG-SQ1), this protein is Large ribosomal subunit protein uL4.